The sequence spans 275 residues: Transmembrane protein 106B (275 aa).

The interval 1–24 (MGKSFSHLPLHSNKEDGYDGMTST) is disordered. A lipid anchor (N-myristoyl glycine) is attached at Gly2. The Cytoplasmic segment spans residues 2-97 (GKSFSHLPLH…QRLRPRRTKL (96 aa)). A helical transmembrane segment spans residues 98-118 (YVMASVFVCLLLSGLAVFFLF). At 119 to 275 (PRSIDVKYIG…EYLNVLQPQQ (157 aa)) the chain is on the lumenal side. Asn146, Asn152, Asn165, and Asn184 each carry an N-linked (GlcNAc...) asparagine glycan. A disulfide bridge connects residues Cys215 and Cys254. An N-linked (GlcNAc...) asparagine glycan is attached at Asn257.

It belongs to the TMEM106 family. As to quaternary structure, can form homomers. Interacts (via N-terminus) with MAP6 (via C-terminus). Interacts (via C-terminus) with the vacuolar-type ATPase subunit ATP6AP1. Interacts (via N-terminus) with AP2M1 and CLTC. Interacts with TMEM106C.

The protein resides in the late endosome membrane. The protein localises to the lysosome membrane. It is found in the cell membrane. In neurons, involved in the transport of late endosomes/lysosomes. May be involved in dendrite morphogenesis and maintenance by regulating lysosomal trafficking. May act as a molecular brake for retrograde transport of late endosomes/lysosomes, possibly via its interaction with MAP6. In motoneurons, may mediate the axonal transport of lysosomes and axonal sorting at the initial segment. It remains unclear whether TMEM106B affects the transport of moving lysosomes in the anterograde or retrograde direction in neurites and whether it is particularly important in the sorting of lysosomes in axons or in dendrites. In neurons, may also play a role in the regulation of lysosomal size and responsiveness to stress. Required for proper lysosomal acidification. The polypeptide is Transmembrane protein 106B (TMEM106B) (Bos taurus (Bovine)).